A 357-amino-acid polypeptide reads, in one-letter code: Eukaryotic translation initiation factor 3 subunit H (357 aa).

The MPN domain maps to 20–162 (VELESLLVMN…MRAYQLTPEF (143 aa)).

It belongs to the eIF-3 subunit H family. In terms of assembly, component of the eukaryotic translation initiation factor 3 (eIF-3) complex. The eIF-3 complex appears to include tif32/eif3a, SPAC25G10.08/eif3b, tif33/eif3c, SPBC4C3.07/eif3f, tif35/eif3g and sum1/eif3i. This set of common subunits may also associate exclusively with either moe1/eif3d and int6/eif3e, or with SPAC821.05/eif3h and SPAC1751.03/eif3m. The eIF-3 complex may also include SPAC3A12.13c/eif3j.

It localises to the cytoplasm. It is found in the nucleus. Functionally, component of the eukaryotic translation initiation factor 3 (eIF-3) complex, which is involved in protein synthesis of a specialized repertoire of mRNAs and, together with other initiation factors, stimulates binding of mRNA and methionyl-tRNAi to the 40S ribosome. The eIF-3 complex specifically targets and initiates translation of a subset of mRNAs involved in cell proliferation. In Schizosaccharomyces pombe (strain 972 / ATCC 24843) (Fission yeast), this protein is Eukaryotic translation initiation factor 3 subunit H (eif3h).